The sequence spans 353 residues: Photosystem II protein D1 (353 aa).

Thr-2 carries the post-translational modification N-acetylthreonine. Thr-2 is subject to Phosphothreonine. Transmembrane regions (helical) follow at residues 29–46 (YIGW…TATS), 118–133 (HFLL…EWEL), and 142–156 (WIAV…AATA). Residue His-118 coordinates chlorophyll a. Tyr-126 provides a ligand contact to pheophytin a. Residues Asp-170 and Glu-189 each coordinate [CaMn4O5] cluster. Residues 197 to 218 (FHMLGVAGVFGGSLFSAMHGSL) form a helical membrane-spanning segment. His-198 serves as a coordination point for chlorophyll a. A quinone contacts are provided by residues His-215 and 264 to 265 (SF). Fe cation is bound at residue His-215. Fe cation is bound at residue His-272. The helical transmembrane segment at 274–288 (FLAAWPVVGIWFTAL) threads the bilayer. [CaMn4O5] cluster-binding residues include His-332, Glu-333, Asp-342, and Ala-344. The propeptide occupies 345 to 353 (AVEAPSTIG).

The protein belongs to the reaction center PufL/M/PsbA/D family. As to quaternary structure, PSII is composed of 1 copy each of membrane proteins PsbA, PsbB, PsbC, PsbD, PsbE, PsbF, PsbH, PsbI, PsbJ, PsbK, PsbL, PsbM, PsbT, PsbX, PsbY, PsbZ, Psb30/Ycf12, at least 3 peripheral proteins of the oxygen-evolving complex and a large number of cofactors. It forms dimeric complexes. The D1/D2 heterodimer binds P680, chlorophylls that are the primary electron donor of PSII, and subsequent electron acceptors. It shares a non-heme iron and each subunit binds pheophytin, quinone, additional chlorophylls, carotenoids and lipids. D1 provides most of the ligands for the Mn4-Ca-O5 cluster of the oxygen-evolving complex (OEC). There is also a Cl(-1) ion associated with D1 and D2, which is required for oxygen evolution. The PSII complex binds additional chlorophylls, carotenoids and specific lipids. is required as a cofactor. Post-translationally, tyr-161 forms a radical intermediate that is referred to as redox-active TyrZ, YZ or Y-Z. C-terminally processed by CTPA; processing is essential to allow assembly of the oxygen-evolving complex and thus photosynthetic growth.

The protein resides in the plastid. The protein localises to the chloroplast thylakoid membrane. It catalyses the reaction 2 a plastoquinone + 4 hnu + 2 H2O = 2 a plastoquinol + O2. Photosystem II (PSII) is a light-driven water:plastoquinone oxidoreductase that uses light energy to abstract electrons from H(2)O, generating O(2) and a proton gradient subsequently used for ATP formation. It consists of a core antenna complex that captures photons, and an electron transfer chain that converts photonic excitation into a charge separation. The D1/D2 (PsbA/PsbD) reaction center heterodimer binds P680, the primary electron donor of PSII as well as several subsequent electron acceptors. In Lemna minor (Common duckweed), this protein is Photosystem II protein D1.